A 206-amino-acid chain; its full sequence is Protein GrpE (206 aa).

Residues 1–36 are disordered; it reads MTDSNGPKDNNQDQAQAAADPVVSKPYIMPDDPEDG.

The protein belongs to the GrpE family. Homodimer.

It is found in the cytoplasm. Its function is as follows. Participates actively in the response to hyperosmotic and heat shock by preventing the aggregation of stress-denatured proteins, in association with DnaK and GrpE. It is the nucleotide exchange factor for DnaK and may function as a thermosensor. Unfolded proteins bind initially to DnaJ; upon interaction with the DnaJ-bound protein, DnaK hydrolyzes its bound ATP, resulting in the formation of a stable complex. GrpE releases ADP from DnaK; ATP binding to DnaK triggers the release of the substrate protein, thus completing the reaction cycle. Several rounds of ATP-dependent interactions between DnaJ, DnaK and GrpE are required for fully efficient folding. The polypeptide is Protein GrpE (Rhodopseudomonas palustris (strain HaA2)).